The sequence spans 542 residues: CTP synthase (542 aa).

Residues 1 to 265 form an amidoligase domain region; the sequence is MARYVFITGG…DNEVLAAFGI (265 aa). Serine 13 is a binding site for CTP. Serine 13 provides a ligand contact to UTP. ATP contacts are provided by residues 14-19 and aspartate 71; that span reads SLGKGI. Aspartate 71 and glutamate 139 together coordinate Mg(2+). Residues 146 to 148, 186 to 191, and lysine 222 each bind CTP; these read DIE and KTKPTQ. Residues 186–191 and lysine 222 each bind UTP; that span reads KTKPTQ. A Glutamine amidotransferase type-1 domain is found at 291–541; the sequence is TIAIVGKYTG…IEAALEQSRL (251 aa). Glycine 353 is an L-glutamine binding site. Cysteine 380 serves as the catalytic Nucleophile; for glutamine hydrolysis. L-glutamine contacts are provided by residues 381-384, glutamate 404, and arginine 469; that span reads FGMQ. Active-site residues include histidine 514 and glutamate 516.

The protein belongs to the CTP synthase family. In terms of assembly, homotetramer.

The catalysed reaction is UTP + L-glutamine + ATP + H2O = CTP + L-glutamate + ADP + phosphate + 2 H(+). It carries out the reaction L-glutamine + H2O = L-glutamate + NH4(+). It catalyses the reaction UTP + NH4(+) + ATP = CTP + ADP + phosphate + 2 H(+). It participates in pyrimidine metabolism; CTP biosynthesis via de novo pathway; CTP from UDP: step 2/2. Its activity is regulated as follows. Allosterically activated by GTP, when glutamine is the substrate; GTP has no effect on the reaction when ammonia is the substrate. The allosteric effector GTP functions by stabilizing the protein conformation that binds the tetrahedral intermediate(s) formed during glutamine hydrolysis. Inhibited by the product CTP, via allosteric rather than competitive inhibition. In terms of biological role, catalyzes the ATP-dependent amination of UTP to CTP with either L-glutamine or ammonia as the source of nitrogen. Regulates intracellular CTP levels through interactions with the four ribonucleotide triphosphates. In Rhizobium meliloti (strain 1021) (Ensifer meliloti), this protein is CTP synthase.